The primary structure comprises 143 residues: MKRLVGVLMILGLMLTSWGLLGSPQTAIAASLSPLSFNPSPVLAEQQFRNAMDDKLATDFGKKIDLNNTNVRAFMQYPGMYPTLARMILKNAPFESVEDVLKMPGLTDTQKEILKNNFSNFVVSPPLDALVEGGDRFNNGIYR.

A signal peptide spans 1-29 (MKRLVGVLMILGLMLTSWGLLGSPQTAIA). Positions 30-44 (ASLSPLSFNPSPVLA) are excised as a propeptide.

The protein belongs to the PsbU family. In terms of assembly, PSII is composed of 1 copy each of membrane proteins PsbA, PsbB, PsbC, PsbD, PsbE, PsbF, PsbH, PsbI, PsbJ, PsbK, PsbL, PsbM, PsbT, PsbX, PsbY, PsbZ, Psb30/Ycf12, peripheral proteins PsbO, CyanoQ (PsbQ), PsbU, PsbV and a large number of cofactors. It forms dimeric complexes.

The protein localises to the cellular thylakoid membrane. Functionally, one of the extrinsic, lumenal subunits of photosystem II (PSII). PSII is a light-driven water plastoquinone oxidoreductase, using light energy to abstract electrons from H(2)O, generating a proton gradient subsequently used for ATP formation. The extrinsic proteins stabilize the structure of photosystem II oxygen-evolving complex (OEC), the ion environment of oxygen evolution and protect the OEC against heat-induced inactivation. The protein is Photosystem II extrinsic protein U of Leptolyngbya laminosa (Phormidium laminosum).